We begin with the raw amino-acid sequence, 137 residues long: ATP synthase epsilon chain (137 aa).

This sequence belongs to the ATPase epsilon chain family. As to quaternary structure, F-type ATPases have 2 components, CF(1) - the catalytic core - and CF(0) - the membrane proton channel. CF(1) has five subunits: alpha(3), beta(3), gamma(1), delta(1), epsilon(1). CF(0) has three main subunits: a, b and c.

Its subcellular location is the cellular thylakoid membrane. Its function is as follows. Produces ATP from ADP in the presence of a proton gradient across the membrane. The protein is ATP synthase epsilon chain (atpC) of Nostoc sp. (strain PCC 7120 / SAG 25.82 / UTEX 2576).